We begin with the raw amino-acid sequence, 273 residues long: Ribosomal RNA small subunit methyltransferase A (273 aa).

S-adenosyl-L-methionine-binding residues include Asn18, Leu20, Gly45, Glu66, Asp91, and Asn113.

It belongs to the class I-like SAM-binding methyltransferase superfamily. rRNA adenine N(6)-methyltransferase family. RsmA subfamily.

It localises to the cytoplasm. It carries out the reaction adenosine(1518)/adenosine(1519) in 16S rRNA + 4 S-adenosyl-L-methionine = N(6)-dimethyladenosine(1518)/N(6)-dimethyladenosine(1519) in 16S rRNA + 4 S-adenosyl-L-homocysteine + 4 H(+). Its function is as follows. Specifically dimethylates two adjacent adenosines (A1518 and A1519) in the loop of a conserved hairpin near the 3'-end of 16S rRNA in the 30S particle. May play a critical role in biogenesis of 30S subunits. This chain is Ribosomal RNA small subunit methyltransferase A, found in Escherichia coli O157:H7.